The primary structure comprises 2053 residues: Nonribosomal peptide synthetase pboA (2053 aa).

The interval 16–402 (ACRDNADRPA…GRRDRVAKVR (387 aa)) is adenylation 1. The Carrier 1 domain occupies 503 to 579 (RSYASVDEVI…HLITVCRERR (77 aa)). Serine 540 is subject to O-(pantetheine 4'-phosphoryl)serine. Positions 611–896 (NDPSLYCVKH…LLQSVHRTVQ (286 aa)) are condensation 1. The adenylation 2 stretch occupies residues 1034–1418 (SAAARNPTNI…GRRDRQVKLR (385 aa)). The region spanning 1515–1593 (VPDTSVKKII…DIVALVEGKI (79 aa)) is the Carrier 2 domain. An O-(pantetheine 4'-phosphoryl)serine modification is found at serine 1553. Residues 1630–1981 (NSQCQSGFNV…LQLRLEYDSD (352 aa)) are condensation 2.

This sequence belongs to the NRP synthetase family. The cofactor is pantetheine 4'-phosphate.

It participates in secondary metabolite biosynthesis. Its function is as follows. Nonribosomal peptide synthetase; part of the gene cluster that mediates the biosynthesis of protubonine B, a hydroxylated and diacetylated cyclo-L-Trp-L-Leu derivative. The first step of the protubonine B synthesis is performed by the nonribosomal peptide synthetase pboA that catalyzes the formation of cyclo-L-Trp-L-Leu by condensing L-Leu with L-Trp. The flavin-dependent monooxygenase pboD is responsible for hydroxylation at C-3 of the indole ring and subsequent formation of the pyrrolidine ring, leadind to protubonine D. Protubonine D is further diacetylated by two acetyltransferases, pboB and pboC, to form the final product protubonine B via protubonine C. This Aspergillus ustus protein is Nonribosomal peptide synthetase pboA.